The chain runs to 561 residues: PR domain zinc finger protein 14 (561 aa).

The segment at 1 to 20 is disordered; sequence MALPPSGETQSQDKANYLPQ. A compositionally biased stretch (polar residues) spans 7–20; that stretch reads GETQSQDKANYLPQ. The interval 184-373 is interaction with CBFA2T2; the sequence is GFNFTEEELS…GVPMNLRVTE (190 aa). Residues 241–356 enclose the SET domain; sequence EGLCLMQTSF…RNQELLVWYG (116 aa). Y355 contributes to the S-adenosyl-L-methionine binding site. The segment at 390–416 adopts a C2H2-type 1; atypical zinc-finger fold; that stretch reads YRCERCGKVFTYKYYRDKHLKYTPCVD. 5 consecutive C2H2-type zinc fingers follow at residues 422–445, 451–473, 479–501, 507–530, and 536–558; these read FPCSLCQRSFEKRDRLRIHILHVH, YLCSTCGKSFSQSSSLNKHMRVH, YQCVYCTKKFTASSILRTHIRQH, FKCKHCGKAFASHAAHDSHVRRSH, and SSCDICGKGFLDQEAFYAHMRLH.

Belongs to the class V-like SAM-binding methyltransferase superfamily. As to quaternary structure, interacts with CBFA2T2. As to expression, restricted to embryonic stem cells and primordial germ cells. Not detected in epiblast-derived stem cells.

It is found in the nucleus. Its function is as follows. Transcription factor that has both positive and negative roles on transcription. Plays a role in cellular pluripotency. Essential for germ cell development at 2 levels: the reacquisition of potential pluripotency, including SOX2 up-regulation, and successful epigenetic reprogramming, characterized by EHMT1 repression. Its association with CBFA2T2 is required for the functions in pluripotency and germ cell formation. This chain is PR domain zinc finger protein 14 (Prdm14), found in Mus musculus (Mouse).